Consider the following 511-residue polypeptide: Ribonuclease Y (511 aa).

A helical transmembrane segment spans residues 3–23 (VTIVASIACFIVGGILSYVLF). In terms of domain architecture, KH spans 201–261 (SVTVFHIESD…VRREIARLAL (61 aa)). The region spanning 327–420 (LLQHARETAN…VQVCDAISGA (94 aa)) is the HD domain.

This sequence belongs to the RNase Y family.

Its subcellular location is the cell membrane. Its function is as follows. Endoribonuclease that initiates mRNA decay. In Bacteroides fragilis (strain ATCC 25285 / DSM 2151 / CCUG 4856 / JCM 11019 / LMG 10263 / NCTC 9343 / Onslow / VPI 2553 / EN-2), this protein is Ribonuclease Y.